Here is a 689-residue protein sequence, read N- to C-terminus: Glycine--tRNA ligase beta subunit (689 aa).

This sequence belongs to the class-II aminoacyl-tRNA synthetase family. As to quaternary structure, tetramer of two alpha and two beta subunits.

Its subcellular location is the cytoplasm. The enzyme catalyses tRNA(Gly) + glycine + ATP = glycyl-tRNA(Gly) + AMP + diphosphate. In Actinobacillus pleuropneumoniae serotype 3 (strain JL03), this protein is Glycine--tRNA ligase beta subunit.